We begin with the raw amino-acid sequence, 451 residues long: Tubby-like F-box protein 12 (451 aa).

The 56-residue stretch at 57-112 (SRWVGLPPELLRDVMKRLEEGESNWPSRKDVVACAAVCRTWREICKDIVQSPEICG) folds into the F-box domain. Positions 387-406 (LEQQQQQQQQNHASSSSSAS) are enriched in low complexity. Positions 387–407 (LEQQQQQQQQNHASSSSSASD) are disordered.

It belongs to the TUB family. Ubiquitous.

In Oryza sativa subsp. japonica (Rice), this protein is Tubby-like F-box protein 12 (TULP12).